The chain runs to 209 residues: Kynurenine formamidase (209 aa).

Substrate is bound at residue W18. 3 residues coordinate Zn(2+): H48, H52, and D54. The active-site Proton donor/acceptor is H58. Positions 160 and 172 each coordinate Zn(2+).

The protein belongs to the Cyclase 1 superfamily. KynB family. Homodimer. The cofactor is Zn(2+).

The enzyme catalyses N-formyl-L-kynurenine + H2O = L-kynurenine + formate + H(+). Its pathway is amino-acid degradation; L-tryptophan degradation via kynurenine pathway; L-kynurenine from L-tryptophan: step 2/2. Its function is as follows. Catalyzes the hydrolysis of N-formyl-L-kynurenine to L-kynurenine, the second step in the kynurenine pathway of tryptophan degradation. The polypeptide is Kynurenine formamidase (Maricaulis maris (strain MCS10) (Caulobacter maris)).